The chain runs to 192 residues: 21.7 kDa class VI heat shock protein (192 aa).

In terms of domain architecture, sHSP spans 80-192 (SLRSLGQCRV…IPKINSKNKF (113 aa)).

This sequence belongs to the small heat shock protein (HSP20) family. May form oligomeric structures.

The protein localises to the cytoplasm. The sequence is that of 21.7 kDa class VI heat shock protein (HSP21.7) from Arabidopsis thaliana (Mouse-ear cress).